A 318-amino-acid chain; its full sequence is Ribosomal RNA small subunit methyltransferase A (318 aa).

6 residues coordinate S-adenosyl-L-methionine: N40, V42, G67, E88, D118, and N137. Positions 296-305 (ADRGGSDREG) are enriched in basic and acidic residues. The disordered stretch occupies residues 296–318 (ADRGGSDREGTSPPTAGQGAPAC).

It belongs to the class I-like SAM-binding methyltransferase superfamily. rRNA adenine N(6)-methyltransferase family. RsmA subfamily.

Its subcellular location is the cytoplasm. It catalyses the reaction adenosine(1518)/adenosine(1519) in 16S rRNA + 4 S-adenosyl-L-methionine = N(6)-dimethyladenosine(1518)/N(6)-dimethyladenosine(1519) in 16S rRNA + 4 S-adenosyl-L-homocysteine + 4 H(+). Functionally, specifically dimethylates two adjacent adenosines (A1518 and A1519) in the loop of a conserved hairpin near the 3'-end of 16S rRNA in the 30S particle. May play a critical role in biogenesis of 30S subunits. The chain is Ribosomal RNA small subunit methyltransferase A from Mycobacterium avium (strain 104).